We begin with the raw amino-acid sequence, 347 residues long: Phenylalanine--tRNA ligase alpha subunit (347 aa).

Glu-262 serves as a coordination point for Mg(2+).

It belongs to the class-II aminoacyl-tRNA synthetase family. Phe-tRNA synthetase alpha subunit type 1 subfamily. As to quaternary structure, tetramer of two alpha and two beta subunits. It depends on Mg(2+) as a cofactor.

It localises to the cytoplasm. It catalyses the reaction tRNA(Phe) + L-phenylalanine + ATP = L-phenylalanyl-tRNA(Phe) + AMP + diphosphate + H(+). The protein is Phenylalanine--tRNA ligase alpha subunit of Roseiflexus castenholzii (strain DSM 13941 / HLO8).